Reading from the N-terminus, the 680-residue chain is Viral IRF2-like protein (680 aa).

The IRF tryptophan pentad repeat DNA-binding region spans serine 7–methionine 103. Disordered regions lie at residues serine 156–glutamate 201, glutamate 220–threonine 257, glutamate 343–serine 365, and alanine 403–serine 423. Positions lysine 168–serine 188 are enriched in low complexity. The segment covering glutamate 191 to asparagine 200 has biased composition (acidic residues). Positions glutamate 220–aspartate 240 are enriched in low complexity.

Belongs to the IRF family. In terms of assembly, interacts with host EIF2AK2/PKR. Interacts with host USP7.

It is found in the host nucleus. The protein localises to the host cytoplasm. Functionally, DNA-binding transcription factor that plays a role in the modulation of host immune response. Acts by interacting with host EIF2AK2/PKR and inhibiting its activation. In turn, EIF2AK2/PKR substrates including EIF2S1 or histone H2A are not phosphorylated. Inhibits type I interferon signaling by targeting host IRF3 during viral reactivation from latency. Attenuates the transcriptional activity of host FOXO3 via activation of the AKT1 signaling pathway, inhibiting FOXO3-mediated apoptosis. Also suppresses the expression of viral early lytic genes in both newly infected and reactivated infected host cells allowing regulation of viral life cycle by harnessing the interferon pathway. Mechanistically, promotes host PML bodies formation as well as host antiviral restriction factors IFIT1-3 expression leading to inhibition of viral early lytic proteins. Also regulates host TRAF3 and TRAF6 ubiquitination by interacting with USP7 deubiquitinase thereby influencing TRAF3/6-mediated signal transduction. The protein is Viral IRF2-like protein (vIRF-2) of Human herpesvirus 8 type P (isolate GK18) (HHV-8).